Consider the following 97-residue polypeptide: Small ribosomal subunit protein bS16c (97 aa).

The protein belongs to the bacterial ribosomal protein bS16 family.

It is found in the plastid. The protein localises to the chloroplast. This Piper cenocladum (Ant piper) protein is Small ribosomal subunit protein bS16c.